A 488-amino-acid chain; its full sequence is Sucrose 6(F)-phosphate phosphorylase (488 aa).

Residues Asp49, His87, 195 to 197 (RLD), Glu238, 295 to 296 (HD), 342 to 345 (DVHQ), and Arg399 contribute to the sucrose 6(F)-phosphate site. The active-site Nucleophile is Asp197. Residue Glu238 is the Proton donor/acceptor of the active site.

The protein belongs to the glycosyl hydrolase 13 family. Sucrose phosphorylase subfamily. As to quaternary structure, monomer.

The catalysed reaction is sucrose 6(F)-phosphate + phosphate = beta-D-fructose 6-phosphate + alpha-D-glucose 1-phosphate. Catalyzes the reversible phosphorolysis of sucrose 6(F)-phosphate into alpha-D-glucose 1-phosphate (Glc1P) and D-fructose 6-phosphate. May be involved in a new pathway for the degradation of sucrose, which could become phosphorylated on its fructose moiety during uptake via a PTS system. To a lesser extent, can also reversibly act on sucrose in vitro. Is also able to catalyze transglycosylation reactions in vitro. The polypeptide is Sucrose 6(F)-phosphate phosphorylase (Thermoanaerobacterium thermosaccharolyticum (strain ATCC 7956 / DSM 571 / NCIMB 9385 / NCA 3814 / NCTC 13789 / WDCM 00135 / 2032) (Clostridium thermosaccharolyticum)).